Here is a 407-residue protein sequence, read N- to C-terminus: Bifunctional enzyme IspD/IspF (407 aa).

Positions 1-246 (MQPLAEATTI…RQDHVSFPDI (246 aa)) are 2-C-methyl-D-erythritol 4-phosphate cytidylyltransferase. A 2-C-methyl-D-erythritol 2,4-cyclodiphosphate synthase region spans residues 247-407 (RTGNGYDVHS…TVIYPGEVPE (161 aa)). A divalent metal cation contacts are provided by aspartate 253 and histidine 255. Residues 253-255 (DVH) and 279-280 (HS) each bind 4-CDP-2-C-methyl-D-erythritol 2-phosphate. Histidine 287 contributes to the a divalent metal cation binding site. 4-CDP-2-C-methyl-D-erythritol 2-phosphate is bound by residues 301–303 (DIG), 377–380 (TTNE), phenylalanine 384, and arginine 387.

This sequence in the N-terminal section; belongs to the IspD/TarI cytidylyltransferase family. IspD subfamily. In the C-terminal section; belongs to the IspF family. It depends on a divalent metal cation as a cofactor.

It catalyses the reaction 2-C-methyl-D-erythritol 4-phosphate + CTP + H(+) = 4-CDP-2-C-methyl-D-erythritol + diphosphate. It carries out the reaction 4-CDP-2-C-methyl-D-erythritol 2-phosphate = 2-C-methyl-D-erythritol 2,4-cyclic diphosphate + CMP. The protein operates within isoprenoid biosynthesis; isopentenyl diphosphate biosynthesis via DXP pathway; isopentenyl diphosphate from 1-deoxy-D-xylulose 5-phosphate: step 2/6. It participates in isoprenoid biosynthesis; isopentenyl diphosphate biosynthesis via DXP pathway; isopentenyl diphosphate from 1-deoxy-D-xylulose 5-phosphate: step 4/6. Functionally, bifunctional enzyme that catalyzes the formation of 4-diphosphocytidyl-2-C-methyl-D-erythritol from CTP and 2-C-methyl-D-erythritol 4-phosphate (MEP) (IspD), and catalyzes the conversion of 4-diphosphocytidyl-2-C-methyl-D-erythritol 2-phosphate (CDP-ME2P) to 2-C-methyl-D-erythritol 2,4-cyclodiphosphate (ME-CPP) with a corresponding release of cytidine 5-monophosphate (CMP) (IspF). The sequence is that of Bifunctional enzyme IspD/IspF from Brucella anthropi (strain ATCC 49188 / DSM 6882 / CCUG 24695 / JCM 21032 / LMG 3331 / NBRC 15819 / NCTC 12168 / Alc 37) (Ochrobactrum anthropi).